The sequence spans 597 residues: Bromodomain-containing protein 9 (597 aa).

Residues 1-10 (MGKKHKKHKA) show a composition bias toward basic residues. Disordered stretches follow at residues 1 to 25 (MGKK…KPLE) and 38 to 138 (EVTE…ENES). Composition is skewed to basic and acidic residues over residues 11–25 (EWRS…KPLE) and 50–62 (SYYD…ERER). Phosphoserine is present on Ser56. A compositionally biased stretch (basic residues) spans 63–73 (HKEKKKKKKKK). Basic and acidic residues predominate over residues 74–85 (SEKEKHLDDEER). Residues 86-97 (RKRKEEKKRKRE) are compositionally biased toward basic residues. The segment covering 111–126 (DPGKKVEVEPPPDRPV) has biased composition (basic and acidic residues). Residues 136-240 (NESTPIQQLL…HAGFKMMSKQ (105 aa)) enclose the Bromo domain. The segment at 214 to 216 (TYN) is histone H4K5ac H4K8ac and histone H4K5bu H4K8bu binding. An N6-acetyllysine; alternate modification is found at Lys373. A Glycyl lysine isopeptide (Lys-Gly) (interchain with G-Cter in SUMO2); alternate cross-link involves residue Lys373. The tract at residues 536-597 (EAQAERGGSR…SPEPAASAKT (62 aa)) is disordered. Residues 544–556 (SRPSSNLSSLSNA) show a composition bias toward low complexity. Phosphoserine is present on residues Ser566 and Ser588.

Binds acetylated histones H3 and H4. Binds butyrylated histone H4. Component of the multiprotein chromatin-remodeling subcomplex SWI/SNF called GBAF, which includes at least BICRA or BICRAL (mutually exclusive), BRD9, SS18, the core BAF subunits, SMARCA2/BRM, SMARCA4/BRG1/BAF190A, ACTL6A/BAF53, SMARCC1/BAF155, and SMARCD1/BAF60A. Interacts (via N-terminal bromodomain) with acetylated RAD54. Interacts (via C-terminus) with RAD51.

It localises to the nucleus. Plays a role in chromatin remodeling and regulation of transcription. Acts as a chromatin reader that recognizes and binds acylated histones: binds histones that are acetylated and/or butyrylated. Component of SWI/SNF chromatin remodeling subcomplex GBAF that carries out key enzymatic activities, changing chromatin structure by altering DNA-histone contacts within a nucleosome in an ATP-dependent manner. Also orchestrates the RAD51-RAD54 complex formation and thereby plays a role in homologous recombination (HR). This is Bromodomain-containing protein 9 (BRD9) from Homo sapiens (Human).